Consider the following 372-residue polypeptide: Fatty acid conjugase FAC2 B (372 aa).

A run of 2 helical transmembrane segments spans residues 44 to 64 (YFLF…SNYI) and 74 to 94 (IVWP…WMIG). Residues 95–99 (HECGH) carry the Histidine box-1 motif. Positions 131–135 (HRNHH) match the Histidine box-2 motif. The next 3 helical transmembrane spans lie at 166 to 186 (IGLM…YIMF), 217 to 237 (VLFS…IVTV), and 240 to 260 (AMPA…ILFA). The short motif at 304 to 308 (HVIHH) is the Histidine box-3 element.

This sequence belongs to the fatty acid desaturase type 1 family. In terms of tissue distribution, expressed exclusively in the developing seeds. Not detected in leaves.

The protein resides in the microsome membrane. The enzyme catalyses a (9Z,12Z)-octadecadienoyl-containing glycerolipid + AH2 + O2 = a (8E,10E,12Z)-octadecatrienoyl-containing glycerolipid + A + 2 H2O. It participates in lipid metabolism; polyunsaturated fatty acid biosynthesis. Fatty acid conjugase converting 18:2(9Z, 12Z) to calendic acid 18:3(8E, 10E, 12Z). Converts alpha-linolenic acid (18:3(9Z, 12Z, 15Z)) into 18:4(8E, 10E, 12Z, 15Z). Also has weak activity on the mono-unsaturates 16:1(9Z) and 18:1(9Z) producing two conjugated double bonds at delta(8) and delta(10) position. The polypeptide is Fatty acid conjugase FAC2 B (Calendula officinalis (Pot marigold)).